We begin with the raw amino-acid sequence, 126 residues long: Large ribosomal subunit protein bL20c (126 aa).

The protein belongs to the bacterial ribosomal protein bL20 family.

The protein localises to the plastid. Its subcellular location is the chloroplast. Its function is as follows. Binds directly to 23S ribosomal RNA and is necessary for the in vitro assembly process of the 50S ribosomal subunit. It is not involved in the protein synthesizing functions of that subunit. The polypeptide is Large ribosomal subunit protein bL20c (Illicium oligandrum (Star anise)).